Consider the following 315-residue polypeptide: Protein ADP-ribosyltransferase (315 aa).

Positions Leu-13–Thr-299 constitute a Deacetylase sirtuin-type domain. Residues Ala-40, Thr-123 to Asp-126, and Gln-143 each bind NAD(+). 4 residues coordinate Zn(2+): Cys-151, Cys-155, Cys-186, and Cys-189. Residues Tyr-238–Thr-240, Asn-264, Tyr-268, and Ile-285 contribute to the NAD(+) site.

This sequence belongs to the sirtuin family. Class M subfamily. It depends on Zn(2+) as a cofactor.

The enzyme catalyses L-aspartyl-[protein] + NAD(+) = 4-O-(ADP-D-ribosyl)-L-aspartyl-[protein] + nicotinamide. Its activity is regulated as follows. Is inhibited by Tenovin-6 in vitro, but not by nicotinamide. Its function is as follows. Catalyzes specifically the mono-ADP-ribosylation of GcvH-L (SAV0324). This activity is dependent on prior lipoylation of the target protein. May be involved in the modulation of the response to host-derived oxidative stress. In contrast to other sirtuin classes, lacks protein deacylase activity, being unable to catalyze delipoylation, debiotinylation, deacetylation and desuccinylation of proteins. This is Protein ADP-ribosyltransferase from Staphylococcus aureus (strain Mu50 / ATCC 700699).